A 716-amino-acid chain; its full sequence is uncharacterized protein (716 aa).

Disordered stretches follow at residues 84-103 (SPSI…ERYP) and 153-189 (VTDE…SQGQ). Phosphoserine is present on Ser97. Glycyl lysine isopeptide (Lys-Gly) (interchain with G-Cter in SUMO2) cross-links involve residues Lys201, Lys204, Lys237, Lys283, and Lys626.

This is an uncharacterized protein from Mus musculus (Mouse).